The chain runs to 400 residues: Probable aspartate/prephenate aminotransferase (400 aa).

Positions 39, 125, and 175 each coordinate L-aspartate. Residue lysine 239 is modified to N6-(pyridoxal phosphate)lysine. Arginine 375 contributes to the L-aspartate binding site.

Belongs to the class-I pyridoxal-phosphate-dependent aminotransferase family. Homodimer. It depends on pyridoxal 5'-phosphate as a cofactor.

Its subcellular location is the cytoplasm. The enzyme catalyses L-aspartate + 2-oxoglutarate = oxaloacetate + L-glutamate. It carries out the reaction L-arogenate + 2-oxoglutarate = prephenate + L-glutamate. Catalyzes the reversible conversion of aspartate and 2-oxoglutarate to glutamate and oxaloacetate. Can also transaminate prephenate in the presence of glutamate. This is Probable aspartate/prephenate aminotransferase (aspC) from Rhizobium leguminosarum bv. phaseoli.